Reading from the N-terminus, the 188-residue chain is Gamma-glutamylcyclotransferase (188 aa).

19-24 (YFAYGS) is a substrate binding site. The active-site Proton acceptor is glutamate 98. Tyrosine 139 is a substrate binding site. Phosphoserine is present on serine 173.

The protein belongs to the gamma-glutamylcyclotransferase family. As to quaternary structure, homodimer.

It catalyses the reaction an alpha-(gamma-L-glutamyl)-L-amino acid = 5-oxo-L-proline + an L-alpha-amino acid. In terms of biological role, catalyzes the formation of 5-oxoproline from gamma-glutamyl dipeptides and may play a significant role in glutathione homeostasis. Induces release of cytochrome c from mitochondria with resultant induction of apoptosis. The chain is Gamma-glutamylcyclotransferase from Homo sapiens (Human).